The sequence spans 39 residues: AKLSTEDLLEQFKGLTLIELSEFVKAFEETFEVGAAAPV.

The protein belongs to the bacterial ribosomal protein bL12 family. As to quaternary structure, homodimer. Part of the ribosomal stalk of the 50S ribosomal subunit. Forms a multimeric L10(L12)X complex, where L10 forms an elongated spine to which 2 to 4 L12 dimers bind in a sequential fashion. Binds GTP-bound translation factors.

Functionally, forms part of the ribosomal stalk which helps the ribosome interact with GTP-bound translation factors. Is thus essential for accurate translation. The chain is Large ribosomal subunit protein bL12 (rplL) from Arthrobacter glacialis.